Consider the following 197-residue polypeptide: Imidazoleglycerol-phosphate dehydratase (197 aa).

It belongs to the imidazoleglycerol-phosphate dehydratase family.

It localises to the cytoplasm. The catalysed reaction is D-erythro-1-(imidazol-4-yl)glycerol 3-phosphate = 3-(imidazol-4-yl)-2-oxopropyl phosphate + H2O. It participates in amino-acid biosynthesis; L-histidine biosynthesis; L-histidine from 5-phospho-alpha-D-ribose 1-diphosphate: step 6/9. In Bradyrhizobium sp. (strain ORS 278), this protein is Imidazoleglycerol-phosphate dehydratase.